We begin with the raw amino-acid sequence, 689 residues long: MAVVSAVRWLGLRSRLGQPLTGRRAGLCEQARSCRFYSGSATLSKVEGTDVTGIEEVVIPKKKTWDKVAVLQALASTVNRDTTAVPYVFQDDPYLMPASSLESRSFLLAKKSGENVAKFIINSYPKYFQKDIAEPHIPCLMPEYFEPQIKDISEAALKERIELRKVKASVDMFDQLLQAGTTVSLETTNSLLDLLCYYGDQEPSTDYHFQQTGQSEALEEENDETSRRKAGHQFGVTWRAKNNAERIFSLMPEKNEHSYCTMIRGMVKHRAYEQALNLYTELLNNRLHADVYTFNALIEATVCAINEKFEEKWSKILELLRHMVAQKVKPNLQTFNTILKCLRRFHVFARSPALQVLREMKAIGIEPSLATYHHIIRLFDQPGDPLKRSSFIIYDIMNELMGKRFSPKDPDDDKFFQSAMSICSSLRDLELAYQVHGLLKTGDNWKFIGPDQHRNFYYSKFFDLICLMEQIDVTLKWYEDLIPSAYFPHSQTMIHLLQALDVANRLEVIPKIWKDSKEYGHTFRSDLREEILMLMARDKHPPELQVAFADCAADIKSAYESQPIRQTAQDWPATSLNCIAILFLRAGRTQEAWKMLGLFRKHNKIPRSELLNELMDSAKVSNSPSQAIEVVELASAFSLPICEGLTQRVMSDFAINQEQKEALSNLTALTSDSDTDSSSDSDSDTSEGK.

Residues 1-37 constitute a mitochondrion transit peptide; the sequence is MAVVSAVRWLGLRSRLGQPLTGRRAGLCEQARSCRFY. Lys126 is modified (N6-acetyllysine). 10 PPR repeats span residues 149–183, 184–219, 255–289, 290–330, 331–367, 368–409, 412–446, 454–488, 489–523, and 572–606; these read IKDISEAALKERIELRKVKASVDMFDQLLQAGTTV, SLETTNSLLDLLCYYGDQEPSTDYHFQQTGQSEALE, NEHSYCTMIRGMVKHRAYEQALNLYTELLNNRLHA, DVYT…KVKP, NLQTFNTILKCLRRFHVFARSPALQVLREMKAIGIEP, SLAT…SPKD, DDKFFQSAMSICSSLRDLELAYQVHGLLKTGDNWK, RNFYYSKFFDLICLMEQIDVTLKWYEDLIPSAYFP, HSQTMIHLLQALDVANRLEVIPKIWKDSKEYGHTF, and PATSLNCIAILFLRAGRTQEAWKMLGLFRKHNKIP. The tract at residues 665–689 is disordered; it reads NLTALTSDSDTDSSSDSDSDTSEGK. Residues 673-689 are compositionally biased toward acidic residues; sequence SDTDSSSDSDSDTSEGK.

This sequence belongs to the mitochondrion-specific ribosomal protein mS39 family. As to quaternary structure, component of the mitochondrial small ribosomal subunit (mt-SSU). Mature mammalian 55S mitochondrial ribosomes consist of a small (28S) and a large (39S) subunit. The 28S small subunit contains a 12S ribosomal RNA (12S mt-rRNA) and 30 different proteins. The 39S large subunit contains a 16S rRNA (16S mt-rRNA), a copy of mitochondrial valine transfer RNA (mt-tRNA(Val)), which plays an integral structural role, and 52 different proteins. Associated with the 12S mitochondrial rRNA (12S mt-rRNA). As to expression, abundant in testes, skeletal muscle and heart tissue.

The protein resides in the mitochondrion. Its function is as follows. Mitochondrial RNA-binding protein that has a role in mitochondrial translation. The protein is Small ribosomal subunit protein mS39 (PTCD3) of Homo sapiens (Human).